A 398-amino-acid polypeptide reads, in one-letter code: MIGFLIMLVSLLFVLSVVVTVHELGHYWAARACGVAIERFSIGFGAPLISWRDKRGVEWCVASIPLGGYVRFAGDENAASVPDQNDLDAMRNEIRRREGDDAVNRYFHFKPVWQRAFIAVAGPMANFILAILVFAVILVSFGAQKTSTTVGEVVAGTPAAAAGFKPGDVILKADNRQIRSFQDIQGYVALRANMPIDFAVERDGRTVHLTATPRLVERQNEISGRVKVGELGLRSAPGGRFERSSLLSAIPDATVEVWDMIKTIAFYLGRLLMGQLPADQISGIIGIGHTAGAVTNGVVEQAPNGKALAIGLIYSQFWLIASLSVSIGFMNLLPIPVLDGGHLVMYAYEAVAKRPLRAEFQAAGFRAGLALILGFMLFAAWNDLNRYDVFKFIGGLFT.

Position 22 (His-22) interacts with Zn(2+). Glu-23 is an active-site residue. His-26 contributes to the Zn(2+) binding site. 3 helical membrane passes run 117 to 139 (FIAV…VILV), 316 to 338 (QFWL…IPVL), and 362 to 381 (AAGF…FAAW). The region spanning 130 to 203 (AILVFAVILV…MPIDFAVERD (74 aa)) is the PDZ domain.

This sequence belongs to the peptidase M50B family. Zn(2+) is required as a cofactor.

It localises to the cell inner membrane. Involved in the regulated intramembrane proteolysis (RIP) of the short isoform of PodJ protein (PodJS), during the swarmer-to-stalked transition. The cleavage occurs near or within the single transmembrane of PodJS thereby releasing the N-terminal segment into the cytoplasm for subsequent degradation. It contributes to preserve asymmetry in the next cell cycle through sequential degradation. The chain is Metalloprotease MmpA (mmpA) from Caulobacter vibrioides (strain ATCC 19089 / CIP 103742 / CB 15) (Caulobacter crescentus).